The sequence spans 274 residues: Sulfur carrier protein FdhD (274 aa).

Cys120 acts as the Cysteine persulfide intermediate in catalysis.

Belongs to the FdhD family.

It localises to the cytoplasm. In terms of biological role, required for formate dehydrogenase (FDH) activity. Acts as a sulfur carrier protein that transfers sulfur from IscS to the molybdenum cofactor prior to its insertion into FDH. This is Sulfur carrier protein FdhD from Burkholderia mallei (strain ATCC 23344).